Reading from the N-terminus, the 96-residue chain is MPGKIAVEVAYALPEKQYLQRVTLQEGATVEEAIRASGLLELRTDIDLTKNKVGIYSHPAKLSDIVHDGDRVEIYRPLIADPKELRRQRAEKSANK.

This sequence belongs to the UPF0125 (RnfH) family.

The polypeptide is Protein RnfH (Escherichia coli O81 (strain ED1a)).